A 417-amino-acid chain; its full sequence is Synaptic vesicle membrane protein VAT-1 homolog-like (417 aa).

2 disordered regions span residues 1 to 33 (MAKE…GSHR) and 382 to 417 (PTPL…PFIQ). Position 390 is a phosphoserine (Ser390). A phosphothreonine mark is found at Thr391 and Thr393. Residue Ser394 is modified to Phosphoserine. Residues 395–405 (EAGEEEEDHEG) are compositionally biased toward acidic residues. The span at 406–417 (DSENKERMPFIQ) shows a compositional bias: basic and acidic residues.

It belongs to the zinc-containing alcohol dehydrogenase family. Quinone oxidoreductase subfamily.

The protein is Synaptic vesicle membrane protein VAT-1 homolog-like (Vat1l) of Mus musculus (Mouse).